A 1294-amino-acid polypeptide reads, in one-letter code: Phosphoribosylformylglycinamidine synthase (1294 aa).

A disordered region spans residues 303–325 (WPGAATGSGGEIRDEGATGRGSK). ATP-binding positions include 305–316 (GAATGSGGEIRD), 384–386 (TGY), and alanine 676. Mg(2+) is bound by residues aspartate 677, glutamate 716, asparagine 720, and aspartate 883. Serine 885 lines the ATP pocket. Residues 1041–1294 (VAVLREQGVN…MFRNARRQLG (254 aa)) enclose the Glutamine amidotransferase type-1 domain. Cysteine 1134 (nucleophile) is an active-site residue. Active-site residues include histidine 1259 and glutamate 1261.

The protein in the N-terminal section; belongs to the FGAMS family. Monomer.

It is found in the cytoplasm. The enzyme catalyses N(2)-formyl-N(1)-(5-phospho-beta-D-ribosyl)glycinamide + L-glutamine + ATP + H2O = 2-formamido-N(1)-(5-O-phospho-beta-D-ribosyl)acetamidine + L-glutamate + ADP + phosphate + H(+). The protein operates within purine metabolism; IMP biosynthesis via de novo pathway; 5-amino-1-(5-phospho-D-ribosyl)imidazole from N(2)-formyl-N(1)-(5-phospho-D-ribosyl)glycinamide: step 1/2. Phosphoribosylformylglycinamidine synthase involved in the purines biosynthetic pathway. Catalyzes the ATP-dependent conversion of formylglycinamide ribonucleotide (FGAR) and glutamine to yield formylglycinamidine ribonucleotide (FGAM) and glutamate. The protein is Phosphoribosylformylglycinamidine synthase of Pectobacterium atrosepticum (strain SCRI 1043 / ATCC BAA-672) (Erwinia carotovora subsp. atroseptica).